A 457-amino-acid polypeptide reads, in one-letter code: Multidrug resistance protein MdtK (457 aa).

Residues 1 to 10 (MQKYISEARL) lie on the Cytoplasmic side of the membrane. A helical membrane pass occupies residues 11-31 (LLALAIPVILAQIAQTAMGFV). At 32 to 52 (DTVMAGGYSATDMAAVAIGTS) the chain is on the extracellular side. The helical transmembrane segment at 53 to 73 (IWLPAILFGHGLLLALTPVIA) threads the bilayer. The Cytoplasmic segment spans residues 74–92 (QLNGSGRRERIAHQVRQGF). Residues 93 to 113 (WLAGFVSVLIMLVLWNAGYII) traverse the membrane as a helical segment. Residues 114-126 (RYMENIDPALADK) lie on the Extracellular side of the membrane. The helical transmembrane segment at 127–147 (AVGYLRALLWGAPGYLFFQVA) threads the bilayer. The Cytoplasmic segment spans residues 148-159 (RNQCEGLAKTKP). The chain crosses the membrane as a helical span at residues 160-180 (GMVMGFIGLLVNIPVNYIFIY). Over 181–188 (GHFGMPEL) the chain is Extracellular. A helical transmembrane segment spans residues 189–209 (GGVGCGVATAAVYWVMFLAMV). The Cytoplasmic segment spans residues 210–242 (SYIKRARSMRDIRNEKGTAKPEPAVMKRLIQLG). A helical transmembrane segment spans residues 243–263 (LPIALALFFEVTLFAVVALLV). Residues 264 to 275 (SPLGIVDVAGHQ) are Extracellular-facing. The helical transmembrane segment at 276 to 296 (IALNFSSLMFVLPMSLAAAVT) threads the bilayer. Residues 297 to 313 (IRVGYRLGQGSTLDAQT) are Cytoplasmic-facing. Residues 314–334 (AARTGLMVGVCMATLTAIFTV) form a helical membrane-spanning segment. The Extracellular portion of the chain corresponds to 335–349 (SLREQIALLYNDNPE). Residues 350–370 (VVTLAAHLMLLAAVYQISDSI) form a helical membrane-spanning segment. Residues 371–386 (QVIGSGILRGYKDTRS) are Cytoplasmic-facing. Residues 387–407 (IFYITFTAYWVLGLPSGYILA) form a helical membrane-spanning segment. The Extracellular portion of the chain corresponds to 408–417 (LTDLVVEPMG). A helical membrane pass occupies residues 418 to 438 (PAGFWIGFIIGLTSAAIMMML). At 439–457 (RMRFLQRMPSAIILQRASR) the chain is on the cytoplasmic side.

It belongs to the multi antimicrobial extrusion (MATE) (TC 2.A.66.1) family. MdtK subfamily.

The protein localises to the cell inner membrane. Functionally, multidrug efflux pump that functions probably as a Na(+)/drug antiporter. The chain is Multidrug resistance protein MdtK (mdtK) from Shigella flexneri.